The chain runs to 305 residues: tRNA dimethylallyltransferase (305 aa).

Position 9–16 (9–16 (GPTASGKS)) interacts with ATP. 11-16 (TASGKS) provides a ligand contact to substrate. The interval 34 to 37 (DSKQ) is interaction with substrate tRNA.

This sequence belongs to the IPP transferase family. Monomer. The cofactor is Mg(2+).

The catalysed reaction is adenosine(37) in tRNA + dimethylallyl diphosphate = N(6)-dimethylallyladenosine(37) in tRNA + diphosphate. Catalyzes the transfer of a dimethylallyl group onto the adenine at position 37 in tRNAs that read codons beginning with uridine, leading to the formation of N6-(dimethylallyl)adenosine (i(6)A). This chain is tRNA dimethylallyltransferase, found in Anaplasma marginale (strain Florida).